Consider the following 99-residue polypeptide: Integration host factor subunit alpha (99 aa).

It belongs to the bacterial histone-like protein family. In terms of assembly, heterodimer of an alpha and a beta chain.

In terms of biological role, this protein is one of the two subunits of integration host factor, a specific DNA-binding protein that functions in genetic recombination as well as in transcriptional and translational control. The chain is Integration host factor subunit alpha (ihfA) from Xylella fastidiosa (strain 9a5c).